The primary structure comprises 154 residues: uncharacterized protein (154 aa).

The protein belongs to the MG032/MG096/MG288 family.

This is an uncharacterized protein from Mycoplasma pneumoniae (strain ATCC 29342 / M129 / Subtype 1) (Mycoplasmoides pneumoniae).